The chain runs to 217 residues: Protein matrimony (217 aa).

The short motif at 39-41 (STP) is the POLO box domain (PBD)-binding element. 2 positions are modified to phosphoserine: serine 63 and serine 66. The disordered stretch occupies residues 83–106 (KQQQQQQHQHCHRTQLKPPPFVLP). Residues 157-217 (NHAANVEQIL…NRIMDVLHTL (61 aa)) form the SAM domain.

As to quaternary structure, interacts with polo. Interacts with cort. In terms of processing, probably ubiquitinated: degraded during the oocyte-to-embryo transition by the anaphase promoting complex/cyclosome (APC/C) containing cort protein.

The protein localises to the nucleus. Its subcellular location is the chromosome. Its function is as follows. Polo kinase inhibitor required to maintain G2 arrest in the meiotic cell cycle in females. Holds heterochromatically paired homologs together from the end of pachytene until metaphase I. Haploinsufficient locus for homologous achiasmate segregation and may be required for the maintenance of heterochromatic pairings. The sequence is that of Protein matrimony from Drosophila melanogaster (Fruit fly).